Consider the following 338-residue polypeptide: Aspartate--ammonia ligase (338 aa).

It belongs to the class-II aminoacyl-tRNA synthetase family. AsnA subfamily.

It localises to the cytoplasm. The catalysed reaction is L-aspartate + NH4(+) + ATP = L-asparagine + AMP + diphosphate + H(+). Its pathway is amino-acid biosynthesis; L-asparagine biosynthesis; L-asparagine from L-aspartate (ammonia route): step 1/1. The polypeptide is Aspartate--ammonia ligase (Lactobacillus delbrueckii subsp. bulgaricus (strain ATCC 11842 / DSM 20081 / BCRC 10696 / JCM 1002 / NBRC 13953 / NCIMB 11778 / NCTC 12712 / WDCM 00102 / Lb 14)).